We begin with the raw amino-acid sequence, 308 residues long: Homoserine kinase (308 aa).

85–95 (PLTRGLGSSAA) lines the ATP pocket.

The protein belongs to the GHMP kinase family. Homoserine kinase subfamily.

The protein resides in the cytoplasm. The catalysed reaction is L-homoserine + ATP = O-phospho-L-homoserine + ADP + H(+). The protein operates within amino-acid biosynthesis; L-threonine biosynthesis; L-threonine from L-aspartate: step 4/5. In terms of biological role, catalyzes the ATP-dependent phosphorylation of L-homoserine to L-homoserine phosphate. This is Homoserine kinase from Caldicellulosiruptor saccharolyticus (strain ATCC 43494 / DSM 8903 / Tp8T 6331).